A 158-amino-acid chain; its full sequence is Large ribosomal subunit protein uL15 (158 aa).

Disordered stretches follow at residues 1-53 and 138-158; these read MRIH…FEGG and ESAGGSCQDLSDTSNAPSNNE. The segment covering 23–35 has biased composition (gly residues); the sequence is ISAGQGASGGFGM. Polar residues predominate over residues 145–158; that stretch reads QDLSDTSNAPSNNE.

Belongs to the universal ribosomal protein uL15 family. Part of the 50S ribosomal subunit.

Its function is as follows. Binds to the 23S rRNA. The chain is Large ribosomal subunit protein uL15 from Crocosphaera subtropica (strain ATCC 51142 / BH68) (Cyanothece sp. (strain ATCC 51142)).